Consider the following 350-residue polypeptide: Blue-sensitive opsin (350 aa).

Topologically, residues 1–36 are extracellular; the sequence is MNGTEGPNFYVPMSNATGVVRSPFEYPQYYLAEPWA. N-linked (GlcNAc...) asparagine glycosylation is found at asparagine 2 and asparagine 15. A helical transmembrane segment spans residues 37–61; that stretch reads FSILAAYMFFLIITGFPINFLTLYV. The Cytoplasmic portion of the chain corresponds to 62 to 73; sequence TIEHKKLRTPLN. Residues 74–98 form a helical membrane-spanning segment; sequence YILLNLAVADLFMVFGGFTTTMYTS. Residues 99–113 are Extracellular-facing; sequence MHGYFVFGETGCNLE. An intrachain disulfide couples cysteine 110 to cysteine 187. A helical transmembrane segment spans residues 114–133; sequence GYFATLGGEISLWSLVVLAI. Topologically, residues 134–152 are cytoplasmic; sequence ERWVVVCKPISNFRFGENH. Residues 153–176 traverse the membrane as a helical segment; the sequence is AIMGLTLTWVMANACAMPPLFGWS. Residues 177–202 lie on the Extracellular side of the membrane; the sequence is RYIPEGLQCSCGIDYYTLKPEVNNES. Asparagine 200 is a glycosylation site (N-linked (GlcNAc...) asparagine). Residues 203-230 traverse the membrane as a helical segment; it reads FVIYMFLVHFTIPLTIISFCYGRLVCAV. The Cytoplasmic portion of the chain corresponds to 231-252; it reads KEAAAQQQESETTQRAEREVTR. A helical transmembrane segment spans residues 253–276; the sequence is MVVIMVISFLVCWIPYASVAWYIF. Residues 277-284 lie on the Extracellular side of the membrane; it reads THQGSTFG. A helical transmembrane segment spans residues 285–309; it reads PIFMTVPSFFAKSSSIYNPMIYICM. At lysine 296 the chain carries N6-(retinylidene)lysine. At 310-350 the chain is on the cytoplasmic side; the sequence is NKQFRNCMITTLFCGKNPFEGEEEGSTTKTEASAVSSVSPA. The interval 330–350 is disordered; sequence GEEEGSTTKTEASAVSSVSPA.

It belongs to the G-protein coupled receptor 1 family. Opsin subfamily. In terms of processing, phosphorylated on some or all of the serine and threonine residues present in the C-terminal region. As to expression, rod shaped photoreceptor cells which mediates vision in dim light.

It is found in the membrane. Visual pigments are the light-absorbing molecules that mediate vision. They consist of an apoprotein, opsin, covalently linked to cis-retinal. This Conger conger (Conger eel) protein is Blue-sensitive opsin.